A 436-amino-acid polypeptide reads, in one-letter code: Ribulose bisphosphate carboxylase large chain (436 aa).

Residue Lys-4 is modified to N6,N6,N6-trimethyllysine. Substrate contacts are provided by Asn-113 and Thr-163. The active-site Proton acceptor is the Lys-165. Lys-167 is a binding site for substrate. Residues Lys-191, Asp-193, and Glu-194 each coordinate Mg(2+). At Lys-191 the chain carries N6-carboxylysine. His-284 serves as the catalytic Proton acceptor. Residues Arg-285, His-317, and Ser-369 each contribute to the substrate site.

This sequence belongs to the RuBisCO large chain family. Type I subfamily. Heterohexadecamer of 8 large chains and 8 small chains; disulfide-linked. The disulfide link is formed within the large subunit homodimers. The cofactor is Mg(2+). The disulfide bond which can form in the large chain dimeric partners within the hexadecamer appears to be associated with oxidative stress and protein turnover.

The protein resides in the plastid. It localises to the chloroplast. The enzyme catalyses 2 (2R)-3-phosphoglycerate + 2 H(+) = D-ribulose 1,5-bisphosphate + CO2 + H2O. The catalysed reaction is D-ribulose 1,5-bisphosphate + O2 = 2-phosphoglycolate + (2R)-3-phosphoglycerate + 2 H(+). In terms of biological role, ruBisCO catalyzes two reactions: the carboxylation of D-ribulose 1,5-bisphosphate, the primary event in carbon dioxide fixation, as well as the oxidative fragmentation of the pentose substrate in the photorespiration process. Both reactions occur simultaneously and in competition at the same active site. This is Ribulose bisphosphate carboxylase large chain from Sanguinaria canadensis (Bloodroot).